The sequence spans 794 residues: Protein sel-1 homolog 1 (794 aa).

A signal peptide spans 1-21 (MQVHVGLTLLLCAVLLSSATA). The tract at residues 20–91 (TASSDDESNQ…EEEVSVGEEI (72 aa)) is disordered. The tract at residues 22–737 (SSDDESNQDE…DIFTQLDMDQ (716 aa)) is interaction with ERLEC1, OS9 and SYVN1. Over 22–738 (SSDDESNQDE…IFTQLDMDQL (717 aa)) the chain is Lumenal. Acidic residues-rich tracts occupy residues 23 to 32 (SDDESNQDES) and 62 to 77 (DSED…EEEE). At Ser-63 the chain carries Phosphoserine. The Fibronectin type-II domain maps to 122–170 (AHGEPCHFPFLFLDKEYDECTSDGRQDGRLWCATTYDYKTDEKWGFCET). Cystine bridges form between Cys-127-Cys-153 and Cys-141-Cys-168. Sel1-like repeat units follow at residues 183 to 218 (AEMI…GMNH), 219 to 254 (TKAL…EEGS), 255 to 290 (PKGQ…LGGN), 291 to 326 (LIAH…NHVA), 373 to 409 (VQAQ…NAGN), 410 to 446 (SHAM…DMGN), 447 to 482 (PVGQ…EQGW), 483 to 518 (VDGQ…QGGH), and 519 to 554 (ILAF…ERGR). Residues Asn-195 and Asn-217 are each glycosylated (N-linked (GlcNAc...) asparagine). Asn-272 carries N-linked (GlcNAc...) asparagine glycosylation. Residues 352-537 (NSGMLEEDLI…MHASGTGVMR (186 aa)) form an important for homodimerization and oligomerization region. N-linked (GlcNAc...) asparagine glycosylation occurs at Asn-431. Asn-608 carries N-linked (GlcNAc...) asparagine glycosylation. 2 Sel1-like repeats span residues 627–662 (TVAR…EQQH) and 664–699 (AQAM…EASP). Residues 643–723 (TDVDYETAFI…VVYFLQYIRE (81 aa)) are interaction with SYVN1. The interval 738 to 794 (LLGPEWDLYLMTIIALLLGTVIAYRQRQHQDVPVPRPPGPWPAPPQQEGPPEQQPPQ) is mediates retention in the endoplasmic reticulum. Residues 739-759 (LGPEWDLYLMTIIALLLGTVI) traverse the membrane as a helical segment. The Cytoplasmic segment spans residues 760–794 (AYRQRQHQDVPVPRPPGPWPAPPQQEGPPEQQPPQ). The tract at residues 768 to 794 (DVPVPRPPGPWPAPPQQEGPPEQQPPQ) is disordered. The segment covering 771 to 794 (VPRPPGPWPAPPQQEGPPEQQPPQ) has biased composition (pro residues).

It belongs to the sel-1 family. As to quaternary structure, homodimer and homooligomer. May form a complex with ERLEC1, HSPA5, OS9, and SYVN1. Interacts with FOXRED2 and EDEM1. Interacts with LPL and LMF1; may stabilize the complex formed by LPL and LMF1 and thereby promote the export of LPL dimers. Component of the HRD1 complex, which comprises at least SYNV1/HRD1, DERL1/2, FAM8A1, HERPUD1/HERP, OS9, SEL1L and UBE2J1. SYNV1 assembles with SEL1L and FAM8A1 through its transmembrane domains, but interaction with its cytoplasmic domain is required to confer stability to FAM8A1 and enhance recruitment of HERPUD1. The interaction with SYNV1/HRD1 is direct. N-glycosylated.

Its subcellular location is the endoplasmic reticulum membrane. Plays a role in the endoplasmic reticulum quality control (ERQC) system also called ER-associated degradation (ERAD) involved in ubiquitin-dependent degradation of misfolded endoplasmic reticulum proteins. Enhances SYVN1 stability. Plays a role in LPL maturation and secretion. Required for normal differentiation of the pancreas epithelium, and for normal exocrine function and survival of pancreatic cells. May play a role in Notch signaling. The polypeptide is Protein sel-1 homolog 1 (Sel1l) (Mesocricetus auratus (Golden hamster)).